The sequence spans 1246 residues: Myosin-1 (1246 aa).

The interval 1 to 41 is disordered; the sequence is MGHSRRPVGGEKKSRGFGRSKAVADVGDGRQTGGKPQVKKA. Positions 51 to 730 constitute a Myosin motor domain; the sequence is IGVSDLTLLS…TLFALEAMRD (680 aa). 144 to 151 is an ATP binding site; that stretch reads GESGAGKT. Ser-372 carries the phosphoserine modification. An actin-binding region spans residues 419–501; the sequence is SIGILDIYGF…PGVFAALNDA (83 aa). IQ domains follow at residues 734-754 and 755-780; these read HNMAIRIQRAWRNYLRYRIEC and AIRIQRFWRRMTGGLELIKVRDQGHK. Residues 788-976 form the TH1 domain; the sequence is RRRMSLLGSR…TIHTSAGEPP (189 aa). Positions 956 to 970 are enriched in polar residues; it reads GSSNVDTYKSSTIHT. Disordered stretches follow at residues 956–1080 and 1127–1246; these read GSSN…PKKP and WTPQ…DDEW. 2 stretches are compositionally biased toward pro residues: residues 1033-1045 and 1065-1078; these read APQPAAVPRPVPQ and APPPPPPVSPPAPK. An SH3 domain is found at 1077–1138; it reads PKKPMAKVLY…PQAYLEEQKA (62 aa). Low complexity-rich tracts occupy residues 1151–1166 and 1214–1228; these read TPATNGTATAAAAKAK and NSASNASLAGGLAEA. The span at 1229–1240 shows a compositional bias: basic and acidic residues; that stretch reads LRQRQEAMHGKQ.

The protein belongs to the TRAFAC class myosin-kinesin ATPase superfamily. Myosin family. In terms of processing, phosphorylation of the TEDS site (Ser-372) is required for the polarization of the actin cytoskeleton. Phosphorylation probably activates the myosin-I ATPase activity.

It localises to the cytoplasm. The protein resides in the cytoskeleton. The protein localises to the actin patch. In terms of biological role, type-I myosin implicated in the organization of the actin cytoskeleton. Required for proper actin cytoskeleton polarization. At the cell cortex, assembles in patch-like structures together with proteins from the actin-polymerizing machinery and promotes actin assembly. Functions as actin nucleation-promoting factor (NPF) for the Arp2/3 complex. Plays an important role in polarized growth, spore germination, hyphal morphogenesis, and septal wall formation. In Aspergillus terreus (strain NIH 2624 / FGSC A1156), this protein is Myosin-1 (myoA).